Reading from the N-terminus, the 535-residue chain is RNA-splicing ligase RtcB homolog 1 (535 aa).

Positions 1–16 (MAKSRYSRKNKGKKLQ) are enriched in basic residues. Residues 1 to 29 (MAKSRYSRKNKGKKLQRVQENTVSTEEKS) are disordered. Mn(2+) is bound by residues Asp152, Cys155, His260, His292, and His383. Position 259 to 263 (259 to 263 (NHYLE)) interacts with GMP. Residues 383-384 (HN), 432-435 (GGSM), Ser439, 458-461 (HGAG), and Lys534 each bind GMP. His458 acts as the GMP-histidine intermediate in catalysis.

It belongs to the RtcB family. Catalytic component of the tRNA-splicing ligase complex. Requires Mn(2+) as cofactor.

It catalyses the reaction a 3'-end 3'-phospho-ribonucleotide-RNA + a 5'-end dephospho-ribonucleoside-RNA + GTP = a ribonucleotidyl-ribonucleotide-RNA + GMP + diphosphate. The enzyme catalyses a 3'-end 2',3'-cyclophospho-ribonucleotide-RNA + a 5'-end dephospho-ribonucleoside-RNA + GTP + H2O = a ribonucleotidyl-ribonucleotide-RNA + GMP + diphosphate + H(+). In terms of biological role, catalytic subunit of the tRNA-splicing ligase complex that acts by directly joining spliced tRNA halves to mature-sized tRNAs by incorporating the precursor-derived splice junction phosphate into the mature tRNA as a canonical 3',5'-phosphodiester. May act as an RNA ligase with broad substrate specificity, and may function toward other RNAs. In Entamoeba dispar (strain ATCC PRA-260 / SAW760), this protein is RNA-splicing ligase RtcB homolog 1.